The chain runs to 876 residues: MQEHYQPAAIEPAAQKKWDDARISNVSEDASKPKYYCLSMFPYPSGKLHMGHVRNYTIGDVLSRFKLLNGFNVMQPMGWDAFGMPAENAAMKNNVAPAAWTYDNIEYMKTQLKSLGFAVDWEREVATCKPEYYRWEQWLFTKLFEKGIVYRKNGTVNWDPVDQTVLANEQVIDGRGWRSGALIEKREIPMYYFKITDYAEELLNDLDKLEHWPEQVKTMQRNWIGKSRGMTVRFAVSDDSKQGLEGDYAKFLQVYTTRPDTLMGATYVAVAAEHPLATAAAADKPELQAFIAECKAGSVAEADMATMEKKGVPTGRYVVNPLNGDKLEVWIANYVLWGYGDGAVMAVPAHDERDFEFAAKYNLPKKQVIAVGDNAFDANRWQEWYGDKENGVLVNSGDLDGLDFQTAFDAVAAKLQSQGAGEPKTQYRLRDWGISRQRYWGCPIPIVHCEKCGDVPVPADQLPVVLPENVVPDGMGSPLAKMPEFYETSCPCCGGAAKRETDTMDTFMESSWYFFRYMSPKFSDGMVSAESAKYWGAVDQYIGGIEHAILHLLYARFFTKLMRDEGLVNVDEPFERLLTQGMVVCETYYRENDKGGKDWINPADVELTFDDKGRPVSAVLKADGLPVVISGTEKMSKSKNNGVDPQELINAYGADTARLFMMFAAPPEQSLEWSDSGVEGAHRFLRRLWRTVYEYLKQGGAVKAFAGNQDGLSKELKDLRHKLHSTTAKVSDDYGRRQQFNTAIAAVMELLNQYDKTDTGSEQGRAVAQEVLEAAVRLLWPIVPHICETLWSELNGAKLWEAGWPTVDEAALVKSEIEVMVQVNGKLRGKITVAADASKADLEAAALANEGAVKFMEGKPAKKIIVVPGRLVNIVV.

The 'HIGH' region signature appears at 42-52 (PYPSGKLHMGH). The 'KMSKS' region motif lies at 634–638 (KMSKS). Residue lysine 637 participates in ATP binding.

Belongs to the class-I aminoacyl-tRNA synthetase family.

The protein resides in the cytoplasm. It catalyses the reaction tRNA(Leu) + L-leucine + ATP = L-leucyl-tRNA(Leu) + AMP + diphosphate. The polypeptide is Leucine--tRNA ligase (Neisseria gonorrhoeae (strain NCCP11945)).